The primary structure comprises 265 residues: MTDRRNIYFFYKKSEETDEQCKKLKQLAEEHGFRVVHHHNEANIIASIGGDGTFLQAVRKTNFRDDCLYVGVAKKGKAHLYADFNIYDTDKMIEATNSEQIEVRKYPLIDVTVDGTSFQCLNEVSIRSSIIKTFVMDVYIDDLHFETFRGDGMIVSTPTGSTAYNKSVDGAIVDPLIPCIQVTELASLNNNTYRTLGSPFILSADRKLTLKIVQDGNDYPIIGLDNEAFSTMNVKEVEVSLSGKMIKTIKLKDNSFWEKVRRTFL.

Residue Asp-51 is the Proton acceptor of the active site. Residues 51–52 (DG), 122–123 (NE), Arg-149, Asp-151, 162–167 (TAYNKS), and Ala-186 contribute to the NAD(+) site.

This sequence belongs to the NAD kinase family. A divalent metal cation serves as cofactor.

It localises to the cytoplasm. The enzyme catalyses NAD(+) + ATP = ADP + NADP(+) + H(+). In terms of biological role, involved in the regulation of the intracellular balance of NAD and NADP, and is a key enzyme in the biosynthesis of NADP. Catalyzes specifically the phosphorylation on 2'-hydroxyl of the adenosine moiety of NAD to yield NADP. The chain is NAD kinase 2 from Bacillus licheniformis (strain ATCC 14580 / DSM 13 / JCM 2505 / CCUG 7422 / NBRC 12200 / NCIMB 9375 / NCTC 10341 / NRRL NRS-1264 / Gibson 46).